The following is a 172-amino-acid chain: Large ribosomal subunit protein bL9 (172 aa).

This sequence belongs to the bacterial ribosomal protein bL9 family.

Its function is as follows. Binds to the 23S rRNA. This Chlamydia caviae (strain ATCC VR-813 / DSM 19441 / 03DC25 / GPIC) (Chlamydophila caviae) protein is Large ribosomal subunit protein bL9.